The sequence spans 555 residues: CTP synthase (555 aa).

Residues 1–267 (MAKFVFVTGG…CKEVLDCLDL (267 aa)) form an amidoligase domain region. Serine 13 is a CTP binding site. Serine 13 provides a ligand contact to UTP. ATP contacts are provided by residues 14–19 (SIGKGI) and aspartate 71. Residues aspartate 71 and glutamate 141 each contribute to the Mg(2+) site. CTP-binding positions include 148–150 (DIE), 188–193 (KTKPTQ), and lysine 224. Residues 188–193 (KTKPTQ) and lysine 224 each bind UTP. In terms of domain architecture, Glutamine amidotransferase type-1 spans 292–534 (KVALVGKYVQ…IQAAQIRVPS (243 aa)). L-glutamine is bound at residue glycine 354. Cysteine 381 acts as the Nucleophile; for glutamine hydrolysis in catalysis. L-glutamine-binding positions include 382-385 (LGMQ), glutamate 405, and arginine 462. Active-site residues include histidine 507 and glutamate 509. A disordered region spans residues 536-555 (PSEAFNPQSKIIEKKSLEQQ). Residues 546–555 (IIEKKSLEQQ) show a composition bias toward basic and acidic residues.

This sequence belongs to the CTP synthase family. In terms of assembly, homotetramer.

The enzyme catalyses UTP + L-glutamine + ATP + H2O = CTP + L-glutamate + ADP + phosphate + 2 H(+). It carries out the reaction L-glutamine + H2O = L-glutamate + NH4(+). It catalyses the reaction UTP + NH4(+) + ATP = CTP + ADP + phosphate + 2 H(+). Its pathway is pyrimidine metabolism; CTP biosynthesis via de novo pathway; CTP from UDP: step 2/2. Its activity is regulated as follows. Allosterically activated by GTP, when glutamine is the substrate; GTP has no effect on the reaction when ammonia is the substrate. The allosteric effector GTP functions by stabilizing the protein conformation that binds the tetrahedral intermediate(s) formed during glutamine hydrolysis. Inhibited by the product CTP, via allosteric rather than competitive inhibition. Catalyzes the ATP-dependent amination of UTP to CTP with either L-glutamine or ammonia as the source of nitrogen. Regulates intracellular CTP levels through interactions with the four ribonucleotide triphosphates. This Prochlorococcus marinus (strain NATL1A) protein is CTP synthase.